We begin with the raw amino-acid sequence, 412 residues long: Probable tRNA pseudouridine synthase D (412 aa).

Asp-97 functions as the Nucleophile in the catalytic mechanism. A TRUD domain is found at 167-370 (ALPNYYGYQR…YGGYRKVVLT (204 aa)).

Belongs to the pseudouridine synthase TruD family.

It catalyses the reaction uridine(13) in tRNA = pseudouridine(13) in tRNA. Functionally, could be responsible for synthesis of pseudouridine from uracil-13 in transfer RNAs. This Pyrobaculum islandicum (strain DSM 4184 / JCM 9189 / GEO3) protein is Probable tRNA pseudouridine synthase D.